The following is a 965-amino-acid chain: PWWP domain-containing protein 4 (965 aa).

One can recognise a PWWP domain in the interval 135–196 (VGDMVWGKVK…PAELIPFEPH (62 aa)). Residues 437–455 (MNFTSSSGNIPGKKSSVSK) are compositionally biased toward polar residues. Disordered stretches follow at residues 437–507 (MNFT…KSSL), 526–577 (VVKR…KSSQ), 649–708 (SAKT…SLAP), and 905–927 (LSSQ…PPLD). Basic and acidic residues-rich tracts occupy residues 456-474 (LSRD…RMGE) and 481-495 (DQEK…KQDE). A compositionally biased stretch (polar residues) spans 496-507 (TGTNSRSNKSSL). The short motif at 546-553 (KKKEYVSE) is the Nuclear localization signal element. Over residues 549–563 (EYVSELNRDTPDKRK) the composition is skewed to basic and acidic residues. Residues 657–676 (NEQSKAGRNRISSDSQQDVP) show a composition bias toward polar residues. Basic and acidic residues predominate over residues 691–702 (ASDKKTNQDATK). Over residues 905 to 919 (LSSQDSEPKPVNNQV) the composition is skewed to polar residues.

Belongs to the PDP family. Component of the PRC2 (polycomb repressive complex 2) complex which regulates histone methylation on histone H3K27.

The protein resides in the nucleus. Functionally, may influence gene expression by regulating the function of the PRC2 complex and modulating H3K27me3 level. This Arabidopsis thaliana (Mouse-ear cress) protein is PWWP domain-containing protein 4.